The following is a 379-amino-acid chain: Alcohol dehydrogenase 2 (379 aa).

Cysteine 48 is a Zn(2+) binding site. 49-53 (HTDML) serves as a coordination point for NAD(+). Positions 69, 100, 103, 106, 114, and 178 each coordinate Zn(2+). NAD(+) is bound by residues 203-208 (GLGAVG), aspartate 227, lysine 232, 275-277 (TGI), 298-300 (IGA), and 321-323 (TTF).

It belongs to the zinc-containing alcohol dehydrogenase family. Class-IV subfamily. As to quaternary structure, homodimer. Zn(2+) serves as cofactor. In terms of tissue distribution, expressed in flowers and disk florets.

The catalysed reaction is (R,R)-chrysanthemol + NAD(+) = (1R,3R)-chrysanthemal + NADH + H(+). It carries out the reaction nerol + NAD(+) = neral + NADH + H(+). The enzyme catalyses (S)-(-)-citronellol + NAD(+) = (S)-(-)-citronellal + NADH + H(+). It catalyses the reaction perillyl alcohol + NAD(+) = perillyl aldehyde + NADH + H(+). The catalysed reaction is (6E)-8-hydroxygeraniol + NAD(+) = (6E)-8-hydroxygeranial + NADH + H(+). It carries out the reaction (2E)-geraniol + NAD(+) = (2E)-geranial + NADH + H(+). Its pathway is isoprenoid biosynthesis. In terms of biological role, component of the monoterpenoid pyrethrins biosynthesis; pyrethrins are widely used plant-derived pesticide. Mediates the conversion of trans-chrysanthemol into trans-chrysanthemal. This is Alcohol dehydrogenase 2 from Tanacetum cinerariifolium (Dalmatian daisy).